We begin with the raw amino-acid sequence, 117 residues long: Aspartate 1-decarboxylase (117 aa).

The active-site Schiff-base intermediate with substrate; via pyruvic acid is Ser-25. Residue Ser-25 is modified to Pyruvic acid (Ser). Residue Thr-57 participates in substrate binding. Tyr-58 serves as the catalytic Proton donor. Residue 72 to 74 (GAA) participates in substrate binding.

The protein belongs to the PanD family. Heterooctamer of four alpha and four beta subunits. Requires pyruvate as cofactor. In terms of processing, is synthesized initially as an inactive proenzyme, which is activated by self-cleavage at a specific serine bond to produce a beta-subunit with a hydroxyl group at its C-terminus and an alpha-subunit with a pyruvoyl group at its N-terminus.

The protein localises to the cytoplasm. It carries out the reaction L-aspartate + H(+) = beta-alanine + CO2. It functions in the pathway cofactor biosynthesis; (R)-pantothenate biosynthesis; beta-alanine from L-aspartate: step 1/1. Functionally, catalyzes the pyruvoyl-dependent decarboxylation of aspartate to produce beta-alanine. This chain is Aspartate 1-decarboxylase, found in Helicobacter pylori (strain J99 / ATCC 700824) (Campylobacter pylori J99).